A 120-amino-acid chain; its full sequence is Peptidyl-tRNA hydrolase (120 aa).

It belongs to the PTH2 family.

The protein localises to the cytoplasm. It carries out the reaction an N-acyl-L-alpha-aminoacyl-tRNA + H2O = an N-acyl-L-amino acid + a tRNA + H(+). In terms of biological role, the natural substrate for this enzyme may be peptidyl-tRNAs which drop off the ribosome during protein synthesis. This chain is Peptidyl-tRNA hydrolase, found in Saccharolobus islandicus (strain Y.N.15.51 / Yellowstone #2) (Sulfolobus islandicus).